We begin with the raw amino-acid sequence, 760 residues long: General transcription and DNA repair factor IIH helicase subunit XPD (760 aa).

The 277-residue stretch at 7–283 folds into the Helicase ATP-binding domain; it reads GLLVYFPYDY…KETDEQRLRD (277 aa). Residue 42 to 49 coordinates ATP; the sequence is MPSGTGKT. [4Fe-4S] cluster is bound by residues C116, C134, C155, and C190. The DEAH box motif lies at 234–237; that stretch reads DEAH. Residues 438-637 are mediates interaction with MMS19; the sequence is MDASLAIKPV…TQSRILKARL (200 aa). The Nuclear localization signal motif lies at 682-695; the sequence is KRFARADKRGKLPR.

It belongs to the helicase family. RAD3/XPD subfamily. In terms of assembly, component of the 7-subunit TFIIH core complex composed of XPB/ERCC3, XPD/ERCC2, GTF2H1, GTF2H2, GTF2H3, GTF2H4 and GTF2H5, which is active in NER. The core complex associates with the 3-subunit CDK-activating kinase (CAK) module composed of CCNH/cyclin H, CDK7 and MNAT1 to form the 10-subunit holoenzyme (holo-TFIIH) active in transcription. The interaction with GTF2H2 results in the stimulation of the 5'--&gt;3' helicase activity. Component of the MMXD complex, which includes CIAO1, ERCC2, CIAO2B, MMS19 and SLC25A5. Interacts with CIAO1 and CIAO2B; the interaction WITH CIAO2B is direct. Interacts with ATF7IP. Interacts directly with MMS19. Part of TBP-based Pol II pre-initiation complex (PIC), in which Pol II core assembles with general transcription factors and other specific initiation factors including GTF2E1, GTF2E2, GTF2F1, GTF2F2, TCEA1, ERCC2, ERCC3, GTF2H2, GTF2H3, GTF2H4, GTF2H5, GTF2A1, GTF2A2, GTF2B and TBP; this large multi-subunit PIC complex mediates DNA unwinding and targets Pol II core to the transcription start site where the first phosphodiester bond forms. Requires Mg(2+) as cofactor. The cofactor is [4Fe-4S] cluster. In terms of processing, ISGylated.

It is found in the nucleus. The protein resides in the cytoplasm. It localises to the cytoskeleton. The protein localises to the spindle. It carries out the reaction Couples ATP hydrolysis with the unwinding of duplex DNA at the replication fork by translocating in the 5'-3' direction. This creates two antiparallel DNA single strands (ssDNA). The leading ssDNA polymer is the template for DNA polymerase III holoenzyme which synthesizes a continuous strand.. The catalysed reaction is ATP + H2O = ADP + phosphate + H(+). In terms of biological role, ATP-dependent 5'-3' DNA helicase. Component of the general transcription and DNA repair factor IIH (TFIIH) core complex which is involved in general and transcription-coupled nucleotide excision repair (NER) of damaged DNA. When complexed to CDK-activating kinase (CAK), involved in transcription by RNA polymerase II. In NER, TFIIH acts by opening DNA around the lesion to allow the excision of the damaged oligonucleotide and its replacement by a new DNA fragment. The ATP-dependent helicase activity of XPD/ERCC2 is required for DNA opening. In transcription, TFIIH has an essential role in transcription initiation. When the pre-initiation complex (PIC) has been established, TFIIH is required for promoter opening and promoter escape. Phosphorylation of the C-terminal tail (CTD) of the largest subunit of RNA polymerase II by the kinase module CAK controls the initiation of transcription. XPD/ERCC2 acts by forming a bridge between CAK and the core-TFIIH complex. Involved in the regulation of vitamin-D receptor activity. As part of the mitotic spindle-associated MMXD complex it plays a role in chromosome segregation. Might have a role in aging process and could play a causative role in the generation of skin cancers. In Cricetulus griseus (Chinese hamster), this protein is General transcription and DNA repair factor IIH helicase subunit XPD.